We begin with the raw amino-acid sequence, 918 residues long: Cell surface glycoprotein 1 (918 aa).

Residues methionine 1 to alanine 34 form the signal peptide. Residues asparagine 37, asparagine 56, asparagine 110, asparagine 219, asparagine 250, asparagine 261, and asparagine 291 are each glycosylated (N-linked (GlcNAc...) asparagine). Asparagine 306 carries N-linked (GalNAc...) asparagine glycosylation. Asparagine 318, asparagine 343, asparagine 392, asparagine 434, asparagine 487, asparagine 541, asparagine 555, asparagine 572, asparagine 585, asparagine 614, asparagine 715, asparagine 776, asparagine 836, and asparagine 845 each carry an N-linked (GlcNAc...) asparagine glycan. Residues histidine 815 to glycine 894 are disordered. Positions tyrosine 833 to valine 846 are enriched in polar residues. The segment covering valine 849 to aspartate 875 has biased composition (acidic residues). A helical transmembrane segment spans residues glycine 894–valine 914. Residues proline 895–phenylalanine 897 carry the PGF sorting signal motif.

This sequence belongs to the halobacterial S-layer protein family. Post-translationally, N-glycosylated on Asn-306; this N-linked glycan is a branched trisaccharide containing 2-amino-6-sulfo-2,6-dideoxy-glucose (sulfoquinovosamine). Cleaved by the archaeosortase ArtA at the C-terminus, with removal of a short hydrophobic segment. In terms of processing, lipidation.

Its subcellular location is the secreted. The protein localises to the cell wall. It localises to the S-layer. The protein resides in the cell membrane. Functionally, S-layer protein. The S-layer is a paracrystalline mono-layered assembly of proteins which coat the surface of the cell. In H.hispanica, the S-layer contains two different glycoproteins, Slg1 and Slg2, which share highly similar amino acid sequences. In Haloarcula hispanica (strain ATCC 33960 / DSM 4426 / JCM 8911 / NBRC 102182 / NCIMB 2187 / VKM B-1755), this protein is Cell surface glycoprotein 1.